A 202-amino-acid polypeptide reads, in one-letter code: Small ribosomal subunit protein uS4c (202 aa).

An S4 RNA-binding domain is found at 90 to 153 (MRLDNIIFRL…KSEAIISKNI (64 aa)).

The protein belongs to the universal ribosomal protein uS4 family. Part of the 30S ribosomal subunit. Contacts protein S5. The interaction surface between S4 and S5 is involved in control of translational fidelity.

The protein resides in the plastid. The protein localises to the chloroplast. One of the primary rRNA binding proteins, it binds directly to 16S rRNA where it nucleates assembly of the body of the 30S subunit. Functionally, with S5 and S12 plays an important role in translational accuracy. In Hookeria lucens (Moss), this protein is Small ribosomal subunit protein uS4c (rps4).